A 436-amino-acid chain; its full sequence is YRLTYYTPDYQVAETDILAAFRMTPQPGVPAEECGAAVAAESSTGTWTTVWTDGLTQLDRYKGRCYDLEPVPGESNRYIAYIAYPIDLFEEGSVTNLLTSIVGNVFGFKALRALRLEDLRIPPDYAKTFWGPPHGIQAERDRLNKYGRPLLGCTVKPKLGLSAKNYGRAVYECLRGGLDFTKDDENVNSQSVMRWRDRSXFCAEAIYKAQAETGEVKGHYLNATAGTVEEMFKRAVFSAQLGVPIIMHDYITGGFTANTSLSMYCRDNGLLLHIHRAMHAVIDRQRNHGIHFRVLAKTLRMSGGDHLHSGTVVGKLEGEREVTLGFVDLMRDPYVEKDRSRGIYFTQDWCGMGGTMPVASGGIHVWHMPALTEIFGDDACLQFGGGTLGHPWGNRPGAAANRVASEACVQARNEGRDLSREGGDVIREACKWSPEL.

Substrate is bound by residues Asn-104 and Thr-154. The active-site Proton acceptor is Lys-156. Substrate is bound at residue Lys-158. Lys-182, Asp-184, and Glu-185 together coordinate Mg(2+). Lys-182 carries the N6-carboxylysine modification. The Proton acceptor role is filled by His-275. Substrate contacts are provided by Arg-276, His-308, and Ser-360.

This sequence belongs to the RuBisCO large chain family. Type I subfamily. In terms of assembly, heterohexadecamer of 8 large chains and 8 small chains. The cofactor is Mg(2+).

It is found in the plastid. The protein localises to the chloroplast. It catalyses the reaction 2 (2R)-3-phosphoglycerate + 2 H(+) = D-ribulose 1,5-bisphosphate + CO2 + H2O. The enzyme catalyses D-ribulose 1,5-bisphosphate + O2 = 2-phosphoglycolate + (2R)-3-phosphoglycerate + 2 H(+). In terms of biological role, ruBisCO catalyzes two reactions: the carboxylation of D-ribulose 1,5-bisphosphate, the primary event in carbon dioxide fixation, as well as the oxidative fragmentation of the pentose substrate in the photorespiration process. Both reactions occur simultaneously and in competition at the same active site. This is Ribulose bisphosphate carboxylase large chain from Euglena stellata.